We begin with the raw amino-acid sequence, 126 residues long: Holo-[acyl-carrier-protein] synthase (126 aa).

The Mg(2+) site is built by Asp-9 and Glu-59.

It belongs to the P-Pant transferase superfamily. AcpS family. It depends on Mg(2+) as a cofactor.

It is found in the cytoplasm. It carries out the reaction apo-[ACP] + CoA = holo-[ACP] + adenosine 3',5'-bisphosphate + H(+). Functionally, transfers the 4'-phosphopantetheine moiety from coenzyme A to a Ser of acyl-carrier-protein. In Myxococcus xanthus (strain DK1622), this protein is Holo-[acyl-carrier-protein] synthase.